Reading from the N-terminus, the 487-residue chain is MDYLVTIGLEIHAQILTRSKMFCGCSADYADAPPNTHVCPVCMGLPGALPTPNRRAIELAALTGLALNCRISHTNVISRKNYFYADLPSGYQRSQYDDPLCVDGWVEIEGDSGPKRIRLTRVHIEEDTGKLIHTNDGGSLVDFNRAGVPLMEIVSKPDISSPEEARRYFQKLRQILVWIGVNSGDMESGALRCDANVSVRPAGQQEYGAKVEIKNINSFRFVERALAYEIERQIRALKAGEPIVQSTRGWDEVSGTTVAQRTKEFAEDYRYFPEPDIPPLHLTDAWIDERRAELPELPDARRIRFIEEYGLTAYDAGVLTDERTVSDYYEQAVAAARTRGVMPKEVANWLTGEFFRLLKETGESPAHAAQRMRPEYIGEVQELLNNGVITRTSAKEAFEAAFREGRSPAVIVAERGLAVIGAGDALTDLVRQVIAGNPKVVEEYRRGKATAIKYLIGQVMKATRGQANPQAVQQALEQELAREQAAC.

This sequence belongs to the GatB/GatE family. GatB subfamily. Heterotrimer of A, B and C subunits.

The enzyme catalyses L-glutamyl-tRNA(Gln) + L-glutamine + ATP + H2O = L-glutaminyl-tRNA(Gln) + L-glutamate + ADP + phosphate + H(+). The catalysed reaction is L-aspartyl-tRNA(Asn) + L-glutamine + ATP + H2O = L-asparaginyl-tRNA(Asn) + L-glutamate + ADP + phosphate + 2 H(+). Its function is as follows. Allows the formation of correctly charged Asn-tRNA(Asn) or Gln-tRNA(Gln) through the transamidation of misacylated Asp-tRNA(Asn) or Glu-tRNA(Gln) in organisms which lack either or both of asparaginyl-tRNA or glutaminyl-tRNA synthetases. The reaction takes place in the presence of glutamine and ATP through an activated phospho-Asp-tRNA(Asn) or phospho-Glu-tRNA(Gln). This chain is Aspartyl/glutamyl-tRNA(Asn/Gln) amidotransferase subunit B, found in Roseiflexus sp. (strain RS-1).